The primary structure comprises 284 residues: Pantothenate synthetase (284 aa).

30–37 (MGNLHDGH) contacts ATP. Catalysis depends on His-37, which acts as the Proton donor. Gln-61 is a (R)-pantoate binding site. Gln-61 provides a ligand contact to beta-alanine. 149–152 (GEKD) is a binding site for ATP. A (R)-pantoate-binding site is contributed by Gln-155. ATP is bound by residues Val-178 and 186–189 (LSSR).

This sequence belongs to the pantothenate synthetase family. Homodimer.

The protein localises to the cytoplasm. The enzyme catalyses (R)-pantoate + beta-alanine + ATP = (R)-pantothenate + AMP + diphosphate + H(+). It participates in cofactor biosynthesis; (R)-pantothenate biosynthesis; (R)-pantothenate from (R)-pantoate and beta-alanine: step 1/1. Functionally, catalyzes the condensation of pantoate with beta-alanine in an ATP-dependent reaction via a pantoyl-adenylate intermediate. The polypeptide is Pantothenate synthetase (Klebsiella pneumoniae (strain 342)).